We begin with the raw amino-acid sequence, 118 residues long: Large ribosomal subunit protein bL19 (118 aa).

It belongs to the bacterial ribosomal protein bL19 family.

Functionally, this protein is located at the 30S-50S ribosomal subunit interface and may play a role in the structure and function of the aminoacyl-tRNA binding site. In Dictyoglomus turgidum (strain DSM 6724 / Z-1310), this protein is Large ribosomal subunit protein bL19.